The primary structure comprises 719 residues: Pesticidal crystal protein Cry1Ia (719 aa).

The protein belongs to the delta endotoxin family.

Promotes colloidosmotic lysis by binding to the midgut epithelial cells of certain coleopteran and lepidopteran species. Active on Plutella xylostella and Bombyx mori. The protein is Pesticidal crystal protein Cry1Ia (cry1Ia) of Bacillus thuringiensis subsp. kurstaki.